The chain runs to 118 residues: Large ribosomal subunit protein bL19 (118 aa).

It belongs to the bacterial ribosomal protein bL19 family.

Functionally, this protein is located at the 30S-50S ribosomal subunit interface and may play a role in the structure and function of the aminoacyl-tRNA binding site. The protein is Large ribosomal subunit protein bL19 of Geobacter sulfurreducens (strain ATCC 51573 / DSM 12127 / PCA).